Reading from the N-terminus, the 387-residue chain is 1-deoxy-D-xylulose 5-phosphate reductoisomerase (387 aa).

8 residues coordinate NADPH: Thr11, Gly12, Ser13, Ile14, Gly37, Arg38, Gln39, and Asn127. Lys128 is a 1-deoxy-D-xylulose 5-phosphate binding site. Glu129 serves as a coordination point for NADPH. Asp153 serves as a coordination point for Mn(2+). 1-deoxy-D-xylulose 5-phosphate is bound by residues Ser154, Glu155, Ser179, and His200. Residue Glu155 participates in Mn(2+) binding. Gly206 provides a ligand contact to NADPH. 1-deoxy-D-xylulose 5-phosphate-binding residues include Ser213, Asn218, Lys219, and Glu222. Glu222 is a Mn(2+) binding site.

The protein belongs to the DXR family. The cofactor is Mg(2+). Requires Mn(2+) as cofactor.

It catalyses the reaction 2-C-methyl-D-erythritol 4-phosphate + NADP(+) = 1-deoxy-D-xylulose 5-phosphate + NADPH + H(+). It functions in the pathway isoprenoid biosynthesis; isopentenyl diphosphate biosynthesis via DXP pathway; isopentenyl diphosphate from 1-deoxy-D-xylulose 5-phosphate: step 1/6. In terms of biological role, catalyzes the NADPH-dependent rearrangement and reduction of 1-deoxy-D-xylulose-5-phosphate (DXP) to 2-C-methyl-D-erythritol 4-phosphate (MEP). This chain is 1-deoxy-D-xylulose 5-phosphate reductoisomerase, found in Symbiobacterium thermophilum (strain DSM 24528 / JCM 14929 / IAM 14863 / T).